The following is a 935-amino-acid chain: Mannosyltransferase regulator 14 (935 aa).

Topologically, residues Met-1–Lys-21 are cytoplasmic. Residues Lys-22–Gly-42 traverse the membrane as a helical; Signal-anchor for type II membrane protein segment. At Arg-43–Tyr-935 the chain is on the lumenal side. The DXD signature appears at Asp-498–Asp-500.

This sequence belongs to the MNN4 family.

The protein localises to the golgi apparatus membrane. Its function is as follows. Plays a role in N-glycan mannosylphosphorylation and has partially redundant function with MNN4. The polypeptide is Mannosyltransferase regulator 14 (Saccharomyces cerevisiae (strain ATCC 204508 / S288c) (Baker's yeast)).